The chain runs to 119 residues: Large ribosomal subunit protein bL20 (119 aa).

This sequence belongs to the bacterial ribosomal protein bL20 family.

Binds directly to 23S ribosomal RNA and is necessary for the in vitro assembly process of the 50S ribosomal subunit. It is not involved in the protein synthesizing functions of that subunit. The sequence is that of Large ribosomal subunit protein bL20 (rplT) from Geobacillus stearothermophilus (Bacillus stearothermophilus).